Reading from the N-terminus, the 186-residue chain is Ribosome-recycling factor (186 aa).

It belongs to the RRF family.

Its subcellular location is the cytoplasm. Responsible for the release of ribosomes from messenger RNA at the termination of protein biosynthesis. May increase the efficiency of translation by recycling ribosomes from one round of translation to another. The protein is Ribosome-recycling factor of Paracidovorax citrulli (strain AAC00-1) (Acidovorax citrulli).